Reading from the N-terminus, the 235-residue chain is NADH-quinone oxidoreductase subunit B 2 (235 aa).

A compositionally biased stretch (low complexity) spans 1 to 14; sequence MGLTSRPTPASRQP. A disordered region spans residues 1–24; the sequence is MGLTSRPTPASRQPASPPPADPVL. Residues Cys63, Cys64, Cys129, and Cys159 each contribute to the [4Fe-4S] cluster site. The tract at residues 188–235 is disordered; that stretch reads TGATGGGPSTDALRSGLVAAPTAPGPTAPASTAPGPTAPAPTQDEERR.

It belongs to the complex I 20 kDa subunit family. In terms of assembly, NDH-1 is composed of 14 different subunits. Subunits NuoB, C, D, E, F, and G constitute the peripheral sector of the complex. [4Fe-4S] cluster serves as cofactor.

It localises to the cell membrane. The enzyme catalyses a quinone + NADH + 5 H(+)(in) = a quinol + NAD(+) + 4 H(+)(out). In terms of biological role, NDH-1 shuttles electrons from NADH, via FMN and iron-sulfur (Fe-S) centers, to quinones in the respiratory chain. The immediate electron acceptor for the enzyme in this species is believed to be a menaquinone. Couples the redox reaction to proton translocation (for every two electrons transferred, four hydrogen ions are translocated across the cytoplasmic membrane), and thus conserves the redox energy in a proton gradient. This is NADH-quinone oxidoreductase subunit B 2 from Streptomyces griseus subsp. griseus (strain JCM 4626 / CBS 651.72 / NBRC 13350 / KCC S-0626 / ISP 5235).